A 246-amino-acid chain; its full sequence is rRNA methyltransferase 2, mitochondrial (246 aa).

A mitochondrion-targeting transit peptide spans 1–18 (MAGYLKLVCVSFQRQGFH). S-adenosyl-L-methionine is bound by residues 83–86 (PGAW), aspartate 112, 129–130 (DV), and aspartate 154. The Proton acceptor role is filled by lysine 194.

This sequence belongs to the class I-like SAM-binding methyltransferase superfamily. RNA methyltransferase RlmE family. Widely expressed, with highest expression in muscle, placenta, and heart.

It is found in the mitochondrion. The enzyme catalyses uridine(1369) in 16S rRNA + S-adenosyl-L-methionine = 2'-O-methyluridine(1369) in 16S rRNA + S-adenosyl-L-homocysteine + H(+). S-adenosyl-L-methionine-dependent 2'-O-ribose methyltransferase that catalyzes the formation of 2'-O-methyluridine at position 1369 (Um1369) in the 16S mitochondrial large subunit ribosomal RNA (mtLSU rRNA), a universally conserved modification in the peptidyl transferase domain of the mtLSU rRNA. This activity may require prior 2'-O-methylguanosine modification at position 1370 (Gm1370) by MRM3. Essential for late-stage assembly of mtLSU required for efficient translation of mitochondrial DNA encoded proteins; methyltransferase activity is not required for this function. Essential for mitochondrial respiratory function. The chain is rRNA methyltransferase 2, mitochondrial from Homo sapiens (Human).